Here is a 378-residue protein sequence, read N- to C-terminus: Quinolinate synthase (378 aa).

H59 and S80 together coordinate iminosuccinate. C125 is a binding site for [4Fe-4S] cluster. Residues 151 to 153 and S168 contribute to the iminosuccinate site; that span reads YAN. C212 contacts [4Fe-4S] cluster. Iminosuccinate contacts are provided by residues 238–240 and T255; that span reads HPE. C309 is a [4Fe-4S] cluster binding site.

It belongs to the quinolinate synthase family. Type 1 subfamily. It depends on [4Fe-4S] cluster as a cofactor.

It is found in the cytoplasm. It carries out the reaction iminosuccinate + dihydroxyacetone phosphate = quinolinate + phosphate + 2 H2O + H(+). The protein operates within cofactor biosynthesis; NAD(+) biosynthesis; quinolinate from iminoaspartate: step 1/1. Catalyzes the condensation of iminoaspartate with dihydroxyacetone phosphate to form quinolinate. This Burkholderia thailandensis (strain ATCC 700388 / DSM 13276 / CCUG 48851 / CIP 106301 / E264) protein is Quinolinate synthase.